We begin with the raw amino-acid sequence, 333 residues long: DNA-directed RNA polymerase subunit alpha (333 aa).

The segment at 1 to 246 (MKKMVQIKYK…AHLQVIGDVK (246 aa)) is alpha N-terminal domain (alpha-NTD). Positions 262 to 333 (VEPSIHSVDI…YNVTLNRGEK (72 aa)) are alpha C-terminal domain (alpha-CTD).

It belongs to the RNA polymerase alpha chain family. As to quaternary structure, homodimer. The RNAP catalytic core consists of 2 alpha, 1 beta, 1 beta' and 1 omega subunit. When a sigma factor is associated with the core the holoenzyme is formed, which can initiate transcription.

It carries out the reaction RNA(n) + a ribonucleoside 5'-triphosphate = RNA(n+1) + diphosphate. DNA-dependent RNA polymerase catalyzes the transcription of DNA into RNA using the four ribonucleoside triphosphates as substrates. The protein is DNA-directed RNA polymerase subunit alpha of Mycoplasmopsis pulmonis (strain UAB CTIP) (Mycoplasma pulmonis).